The sequence spans 186 residues: Tumor necrosis factor alpha-induced protein 8-like protein 1 (186 aa).

It belongs to the TNFAIP8 family.

Its subcellular location is the cytoplasm. The chain is Tumor necrosis factor alpha-induced protein 8-like protein 1 (TNFAIP8L1) from Gallus gallus (Chicken).